Consider the following 291-residue polypeptide: Farnesyl diphosphate synthase (291 aa).

Residues Lys-44, Arg-47, and His-76 each coordinate isopentenyl diphosphate. Mg(2+) contacts are provided by Asp-83 and Asp-89. Residue Arg-94 coordinates (2E)-geranyl diphosphate. Arg-95 is a binding site for isopentenyl diphosphate. Residues Lys-177, Thr-178, Gln-215, and Lys-232 each contribute to the (2E)-geranyl diphosphate site.

It belongs to the FPP/GGPP synthase family. It depends on Mg(2+) as a cofactor.

The protein resides in the cytoplasm. It catalyses the reaction isopentenyl diphosphate + (2E)-geranyl diphosphate = (2E,6E)-farnesyl diphosphate + diphosphate. This chain is Farnesyl diphosphate synthase (fps), found in Micrococcus luteus (Micrococcus lysodeikticus).